The sequence spans 166 residues: MLVIHRRTTPQATWSAELHLTYEARSKSRLRCFSAAGEDVGLFLERGQPPLHDGEFLEAEDGRIVKVCARPEALLHVTCRNAFELTRAAYHLGNRHVALQVGDGWLRLLDDYVLKAMLEQLGASTAPLEAPFQPEHGAYGGGHHHSRHGDEDFNYPPRLHQFGVRP.

Residues 132 to 156 (FQPEHGAYGGGHHHSRHGDEDFNYP) are disordered.

This sequence belongs to the UreE family.

It is found in the cytoplasm. Its function is as follows. Involved in urease metallocenter assembly. Binds nickel. Probably functions as a nickel donor during metallocenter assembly. This Pseudomonas fluorescens (strain ATCC BAA-477 / NRRL B-23932 / Pf-5) protein is Urease accessory protein UreE.